Here is a 124-residue protein sequence, read N- to C-terminus: uncharacterized protein (124 aa).

The protein resides in the plastid. It localises to the chloroplast. This is an uncharacterized protein from Chlamydomonas reinhardtii (Chlamydomonas smithii).